The primary structure comprises 662 residues: DNA ligase (662 aa).

NAD(+)-binding positions include 31 to 35 (DKDYD) and 79 to 80 (SL). Lys-121 serves as the catalytic N6-AMP-lysine intermediate. Residues Arg-143, Glu-177, and Lys-313 each coordinate NAD(+). Cys-406, Cys-409, Cys-422, and Cys-428 together coordinate Zn(2+). Positions 586-662 (VLESPFMGKT…LSEEEFENMI (77 aa)) constitute a BRCT domain.

Belongs to the NAD-dependent DNA ligase family. LigA subfamily. Requires Mg(2+) as cofactor. Mn(2+) is required as a cofactor.

The catalysed reaction is NAD(+) + (deoxyribonucleotide)n-3'-hydroxyl + 5'-phospho-(deoxyribonucleotide)m = (deoxyribonucleotide)n+m + AMP + beta-nicotinamide D-nucleotide.. In terms of biological role, DNA ligase that catalyzes the formation of phosphodiester linkages between 5'-phosphoryl and 3'-hydroxyl groups in double-stranded DNA using NAD as a coenzyme and as the energy source for the reaction. It is essential for DNA replication and repair of damaged DNA. This chain is DNA ligase, found in Clostridium perfringens (strain ATCC 13124 / DSM 756 / JCM 1290 / NCIMB 6125 / NCTC 8237 / Type A).